Reading from the N-terminus, the 1400-residue chain is DNA-directed RNA polymerase subunit beta' (1400 aa).

Cys70, Cys72, Cys85, and Cys88 together coordinate Zn(2+). Asp460, Asp462, and Asp464 together coordinate Mg(2+). Zn(2+) is bound by residues Cys814, Cys889, Cys896, and Cys899.

It belongs to the RNA polymerase beta' chain family. The RNAP catalytic core consists of 2 alpha, 1 beta, 1 beta' and 1 omega subunit. When a sigma factor is associated with the core the holoenzyme is formed, which can initiate transcription. It depends on Mg(2+) as a cofactor. Requires Zn(2+) as cofactor.

It carries out the reaction RNA(n) + a ribonucleoside 5'-triphosphate = RNA(n+1) + diphosphate. DNA-dependent RNA polymerase catalyzes the transcription of DNA into RNA using the four ribonucleoside triphosphates as substrates. This chain is DNA-directed RNA polymerase subunit beta', found in Alcanivorax borkumensis (strain ATCC 700651 / DSM 11573 / NCIMB 13689 / SK2).